We begin with the raw amino-acid sequence, 444 residues long: Phosphoglucosamine mutase (444 aa).

S101 (phosphoserine intermediate) is an active-site residue. 4 residues coordinate Mg(2+): S101, D240, D242, and D244. S101 carries the phosphoserine modification.

Belongs to the phosphohexose mutase family. Requires Mg(2+) as cofactor. Activated by phosphorylation.

It carries out the reaction alpha-D-glucosamine 1-phosphate = D-glucosamine 6-phosphate. Its function is as follows. Catalyzes the conversion of glucosamine-6-phosphate to glucosamine-1-phosphate. This chain is Phosphoglucosamine mutase, found in Photobacterium profundum (strain SS9).